A 285-amino-acid polypeptide reads, in one-letter code: Cytochrome P450 monooxygenase eupD (285 aa).

Positions 1–19 (MSIAGLVTTLPWLMNMLRA) are cleaved as a signal peptide. Cysteine 229 is a binding site for heme.

This sequence belongs to the cytochrome P450 family. Heme serves as cofactor.

It functions in the pathway secondary metabolite biosynthesis; terpenoid biosynthesis. Functionally, cytochrome P450 monooxygenase; part of the gene cluster that mediates the biosynthesis of eupenifeldin, a bistropolone meroterpenoid that acts as an antitumor agent. The first step of eupenifeldin biosynthesis is the biosynthesis of 3-methylorcinaldehyde performed by the non-reducing polyketide synthase eupA. Oxidative dearomatization of 3-methylorcinaldehyde likely catalyzed by the FAD-dependent monooxygenase eupB is followed by oxidative ring expansion by the 2-oxoglutarate-dependent dioxygenase eupC to provide the first tropolone metabolite, tropolone stipitaldehyde. In parallel, generation of sesquiterpene alpha-humulene from farnesylpyrophosphate (FPP) is catalyzed by the terpene cyclase eupE. The cytochrome P450 monooxygenase eupD then hydroxylates humulene to humulenol. The putative Diels-Alderase eupF probably catalyzes the formation of the tropolone-humulene skeleton by linking humulenol and the polyketide moiety. The short-chain dehydrogenase/reductase eupG and the flavin-dependent monooxygenase eupH are also essential for eupenifeldin biosynthesis and are likely the additional decorating enzymes of the tropolone-humulene skeleton to produce final eupenifeldin or derivatives. This chain is Cytochrome P450 monooxygenase eupD, found in Phoma sp.